Here is a 192-residue protein sequence, read N- to C-terminus: uncharacterized protein (192 aa).

The Nudix hydrolase domain maps to Q29–S160. Positions G67 to A89 match the Nudix box motif. Residues E83 and E87 each coordinate Mg(2+).

This sequence belongs to the Nudix hydrolase family. PCD1 subfamily. The cofactor is Mn(2+). Requires Mg(2+) as cofactor.

Functionally, probably mediates the hydrolysis of some nucleoside diphosphate derivatives. This is an uncharacterized protein from Salmonella agona (strain SL483).